Here is a 172-residue protein sequence, read N- to C-terminus: Ribosome maturation factor RimP (172 aa).

This sequence belongs to the RimP family.

The protein localises to the cytoplasm. Its function is as follows. Required for maturation of 30S ribosomal subunits. The protein is Ribosome maturation factor RimP of Nitratidesulfovibrio vulgaris (strain ATCC 29579 / DSM 644 / CCUG 34227 / NCIMB 8303 / VKM B-1760 / Hildenborough) (Desulfovibrio vulgaris).